The following is a 399-amino-acid chain: Enoyl-[acyl-carrier-protein] reductase [NADH] (399 aa).

Residues Gly-48–Tyr-53, Phe-74–Glu-75, Asp-111–Ala-112, and Leu-139–Ala-140 contribute to the NAD(+) site. Tyr-225 is a binding site for substrate. Tyr-235 acts as the Proton donor in catalysis. Residues Lys-244 and Val-274–Thr-276 contribute to the NAD(+) site.

The protein belongs to the TER reductase family. Monomer.

It carries out the reaction a 2,3-saturated acyl-[ACP] + NAD(+) = a (2E)-enoyl-[ACP] + NADH + H(+). Its pathway is lipid metabolism; fatty acid biosynthesis. Its function is as follows. Involved in the final reduction of the elongation cycle of fatty acid synthesis (FAS II). Catalyzes the reduction of a carbon-carbon double bond in an enoyl moiety that is covalently linked to an acyl carrier protein (ACP). The sequence is that of Enoyl-[acyl-carrier-protein] reductase [NADH] from Erwinia tasmaniensis (strain DSM 17950 / CFBP 7177 / CIP 109463 / NCPPB 4357 / Et1/99).